The chain runs to 522 residues: Involucrin (522 aa).

Polar residues predominate over residues 1–15; that stretch reads MSQQHTLPVTLSPAL. Disordered regions lie at residues 1-126, 159-329, and 366-496; these read MSQQ…LEEE, QEGQ…LVQQ, and QEGQ…QPVL. Residues 76 to 91 show a composition bias toward low complexity; that stretch reads EQQQQEPQEQELQQQH. Residues 92–126 show a composition bias toward basic and acidic residues; it reads WEQHEEHQKAENPEQQLKQEKAQRDQQLNEHLEEE. The span at 169-181 shows a compositional bias: low complexity; the sequence is QEGQLELPEQQEG. Basic and acidic residues-rich tracts occupy residues 182-198, 214-231, 252-264, 274-290, and 305-323; these read QLEHLEQQEGQLKHLDQ, KHLEQQEGQLKHLEHQKG, QLKHLDQQEKQPE, KHLEQQEGQLEHMEHQE, and QLEEQEGQPKHLEEEEGQL. Positions 375 to 389 are enriched in low complexity; sequence QQQGQLEVSEQQVGQ. Composition is skewed to basic and acidic residues over residues 391–401, 409–418, and 431–465; these read KHLEQEGKQLE, QLKHLEKQEA, and KHPEQQEKQLEHPEQQEGQLKHLEQQEGQLKDLEQ. Residues 466–479 are compositionally biased toward low complexity; that stretch reads QKGQLEQQQGQLEQ.

Belongs to the involucrin family. Directly or indirectly cross-linked to cornifelin (CNFN). Substrate of transglutaminase. Specific glutamines or lysines are cross-linked to keratins, desmoplakin and to inter involucrin molecules. Keratinocytes of epidermis and other stratified squamous epithelia.

It is found in the cytoplasm. Its function is as follows. Part of the insoluble cornified cell envelope (CE) of stratified squamous epithelia. The sequence is that of Involucrin (IVL) from Hylobates lar (Lar gibbon).